The chain runs to 202 residues: ATP-dependent Clp protease proteolytic subunit 2 (202 aa).

Serine 99 functions as the Nucleophile in the catalytic mechanism. The active site involves histidine 124.

The protein belongs to the peptidase S14 family. Fourteen ClpP subunits assemble into 2 heptameric rings which stack back to back to give a disk-like structure with a central cavity, resembling the structure of eukaryotic proteasomes.

The protein resides in the cytoplasm. It catalyses the reaction Hydrolysis of proteins to small peptides in the presence of ATP and magnesium. alpha-casein is the usual test substrate. In the absence of ATP, only oligopeptides shorter than five residues are hydrolyzed (such as succinyl-Leu-Tyr-|-NHMec, and Leu-Tyr-Leu-|-Tyr-Trp, in which cleavage of the -Tyr-|-Leu- and -Tyr-|-Trp bonds also occurs).. Its function is as follows. Cleaves peptides in various proteins in a process that requires ATP hydrolysis. Has a chymotrypsin-like activity. Plays a major role in the degradation of misfolded proteins. This Desulfitobacterium hafniense (strain Y51) protein is ATP-dependent Clp protease proteolytic subunit 2.